We begin with the raw amino-acid sequence, 169 residues long: S-ribosylhomocysteine lyase (169 aa).

Fe cation is bound by residues H54, H58, and C129.

Belongs to the LuxS family. Homodimer. The cofactor is Fe cation.

The catalysed reaction is S-(5-deoxy-D-ribos-5-yl)-L-homocysteine = (S)-4,5-dihydroxypentane-2,3-dione + L-homocysteine. Functionally, involved in the synthesis of autoinducer 2 (AI-2) which is secreted by bacteria and is used to communicate both the cell density and the metabolic potential of the environment. The regulation of gene expression in response to changes in cell density is called quorum sensing. Catalyzes the transformation of S-ribosylhomocysteine (RHC) to homocysteine (HC) and 4,5-dihydroxy-2,3-pentadione (DPD). The protein is S-ribosylhomocysteine lyase of Haemophilus ducreyi (strain 35000HP / ATCC 700724).